A 145-amino-acid chain; its full sequence is Transcription antitermination protein NusB (145 aa).

The protein belongs to the NusB family.

Functionally, involved in transcription antitermination. Required for transcription of ribosomal RNA (rRNA) genes. Binds specifically to the boxA antiterminator sequence of the ribosomal RNA (rrn) operons. The sequence is that of Transcription antitermination protein NusB from Burkholderia lata (strain ATCC 17760 / DSM 23089 / LMG 22485 / NCIMB 9086 / R18194 / 383).